Consider the following 857-residue polypeptide: MAFPAPAFSLANLLNGSYGVDTPEDMERLRSEQREEAAAACRNYRPLPAVDVSESVTEDAHSLQTPDGAPAEAVSDEFVTYGAEDYLEKSDDELLVAFETMVKPMRIGQLWCPAFNKCSFISSIAMARALLLAPRTSHRTMKCFEDLVAAIYTKSDFYYSEECEADDVQMDISSRDVPGYSFEPWSRTSGFEPPPICEACDMIMYQCPCFDFNALKKPCAERTFADDYVIEGLDGVVDNATLLSNLGPFLVPVKCQYEKCPTPTIAIPPNLNRATDRVDINLVQSICDSTLPTHSNYDDSFHQVFVESADYSIDLDHVRLRQSDLIAKIPDSGHMIPVLNTGSGHKRVGTTKEVLTAIKKRNADVPELGDSVNLSRLSKAVAERFFISYINGNSLASSNFVNVVSNFHDYMEKWKSSGLSYDDLPDLHAENLQFYDHMIKSDVKPVVSDTLNIDRPVPATITYHKKSITSQFSPLFTALFERFQRCLRERIILPVGKISSLEMAGFDVKNKYCLEIDLSKFDKSQGEFHLLIQEHILNGLGCPAPITKWWCDFHRFSYIRDRRAGVGMPISFQRRTGDAFTYFGNTIVTMAEFAWCYDTDQFEKLLFSGDDSLGFSQLPPVGDSSKFTTLYNMEAKVMEPSVPYICSKFLLSDEFGNTFSVPDPLREVQRLGTKKIPYSDNDEFLFAHFMQFVDRLKFLDRMSQSCIDQLSIFFELKYKKSGEEAALMLGAFKKYTANFQSYKELYYSDRRQCELINSFCISEFRVERVNSNKQRKKHGIERRCNDKRRTPTGSYGGGEEAETKVSQTESTGTRSQKSQRESAFKSQTVPLPTVLSSGRSGTDRVIPPCERGEGTRA.

Residues 511–624 enclose the RdRp catalytic domain; the sequence is KYCLEIDLSK…FSQLPPVGDS (114 aa). The disordered stretch occupies residues 775–857; that stretch reads RKKHGIERRC…PCERGEGTRA (83 aa). Composition is skewed to polar residues over residues 804–816 and 824–840; these read KVSQ…TRSQ and FKSQ…SGRS.

It belongs to the ssRNA positive-strand viruses RNA-directed RNA polymerase family. As to quaternary structure, interacts with replication protein 1a.

It carries out the reaction RNA(n) + a ribonucleoside 5'-triphosphate = RNA(n+1) + diphosphate. Its function is as follows. RNA-dependent RNA polymerase which replicates the viral genome composed of 3 RNA segments, RNA1, RNA2 and RNA3. The protein is RNA-directed RNA polymerase 2a of Cucumber mosaic virus (strain B) (CMV).